The primary structure comprises 76 residues: cAMP-dependent protein kinase inhibitor alpha (76 aa).

The residue at position 2 (Thr2) is an N-acetylthreonine. The interval 49-76 is disordered; sequence KTEGEEDAQRSSTEQSGEAQGEAAKSES.

Belongs to the PKI family.

Extremely potent competitive inhibitor of cAMP-dependent protein kinase activity, this protein interacts with the catalytic subunit of the enzyme after the cAMP-induced dissociation of its regulatory chains. In Homo sapiens (Human), this protein is cAMP-dependent protein kinase inhibitor alpha (PKIA).